The following is a 377-amino-acid chain: DNA replication and repair protein RecF (377 aa).

30 to 37 (GQNAQGKS) is an ATP binding site.

This sequence belongs to the RecF family.

It is found in the cytoplasm. In terms of biological role, the RecF protein is involved in DNA metabolism; it is required for DNA replication and normal SOS inducibility. RecF binds preferentially to single-stranded, linear DNA. It also seems to bind ATP. This Cyanothece sp. (strain PCC 7425 / ATCC 29141) protein is DNA replication and repair protein RecF.